Consider the following 179-residue polypeptide: Large ribosomal subunit protein uL5 (179 aa).

Belongs to the universal ribosomal protein uL5 family. In terms of assembly, part of the 50S ribosomal subunit; part of the 5S rRNA/L5/L18/L25 subcomplex. Contacts the 5S rRNA and the P site tRNA. Forms a bridge to the 30S subunit in the 70S ribosome.

Its function is as follows. This is one of the proteins that bind and probably mediate the attachment of the 5S RNA into the large ribosomal subunit, where it forms part of the central protuberance. In the 70S ribosome it contacts protein S13 of the 30S subunit (bridge B1b), connecting the 2 subunits; this bridge is implicated in subunit movement. Contacts the P site tRNA; the 5S rRNA and some of its associated proteins might help stabilize positioning of ribosome-bound tRNAs. This Bacillus velezensis (strain DSM 23117 / BGSC 10A6 / LMG 26770 / FZB42) (Bacillus amyloliquefaciens subsp. plantarum) protein is Large ribosomal subunit protein uL5.